The chain runs to 114 residues: MAFNPIAPVHPLMLQQNLNPIQENNPVEGSGPQTPAGAAKVGADFGQFLQEALQKVDNLQKEADVASLGLATGQIQDLHTAVIAMEKAGLSLSLTVDVRNRALDAYHEIMRMQI.

Belongs to the FliE family.

The protein resides in the bacterial flagellum basal body. In Desulfitobacterium hafniense (strain DSM 10664 / DCB-2), this protein is Flagellar hook-basal body complex protein FliE.